Consider the following 586-residue polypeptide: uncharacterized protein (586 aa).

2 coiled-coil regions span residues 183–293 (THTE…ELEN) and 331–400 (FKDK…DKKN).

This is an uncharacterized protein from Bacillus subtilis (strain 168).